The following is a 602-amino-acid chain: Arginine--tRNA ligase (602 aa).

The 'HIGH' region motif lies at 138-148 (ANPTGPMHVGH).

This sequence belongs to the class-I aminoacyl-tRNA synthetase family. Monomer.

Its subcellular location is the cytoplasm. It catalyses the reaction tRNA(Arg) + L-arginine + ATP = L-arginyl-tRNA(Arg) + AMP + diphosphate. This Gluconobacter oxydans (strain 621H) (Gluconobacter suboxydans) protein is Arginine--tRNA ligase.